Here is an 863-residue protein sequence, read N- to C-terminus: Leucine--tRNA ligase (863 aa).

The 'HIGH' region motif lies at 42–52; sequence PYPSGRLHMGH. A 'KMSKS' region motif is present at residues 618-622; it reads KMSKS. Lys-621 contacts ATP.

Belongs to the class-I aminoacyl-tRNA synthetase family.

Its subcellular location is the cytoplasm. The enzyme catalyses tRNA(Leu) + L-leucine + ATP = L-leucyl-tRNA(Leu) + AMP + diphosphate. The chain is Leucine--tRNA ligase from Colwellia psychrerythraea (strain 34H / ATCC BAA-681) (Vibrio psychroerythus).